A 257-amino-acid polypeptide reads, in one-letter code: MAISKGAINVRSIFIGGEEPCICAPVVGVDAEQVLAETRQISAKKPHLIEWRADFFNGIHDDRQVVATAKEIRTIAGDIPILFTVRSEREGGRPIPLTEEEKMRLFETVCQSGAIDLLDYELVHEPYVATVRQLSRQYGVRLILSYHNFDFTPAKEELVAKMRQAGKYGADIAKVAVMPKSLQDVLVLLQATEEARQELPIPLITMSMGGLGAITRLAGGLFGSAVTFAVGQQSSAPGQIPIEEVKDVLSVIMKYSQ.

Residues 50–52 (EWR) and arginine 86 each bind 3-dehydroquinate. Histidine 147 (proton donor/acceptor) is an active-site residue. The Schiff-base intermediate with substrate role is filled by lysine 174. Residues arginine 216, serine 235, and glutamine 239 each coordinate 3-dehydroquinate.

Belongs to the type-I 3-dehydroquinase family. As to quaternary structure, homodimer.

It catalyses the reaction 3-dehydroquinate = 3-dehydroshikimate + H2O. It participates in metabolic intermediate biosynthesis; chorismate biosynthesis; chorismate from D-erythrose 4-phosphate and phosphoenolpyruvate: step 3/7. Functionally, involved in the third step of the chorismate pathway, which leads to the biosynthesis of aromatic amino acids. Catalyzes the cis-dehydration of 3-dehydroquinate (DHQ) and introduces the first double bond of the aromatic ring to yield 3-dehydroshikimate. The chain is 3-dehydroquinate dehydratase from Geobacillus thermodenitrificans (strain NG80-2).